Here is a 472-residue protein sequence, read N- to C-terminus: 3-isopropylmalate dehydratase large subunit (472 aa).

[4Fe-4S] cluster-binding residues include cysteine 353, cysteine 414, and cysteine 417.

This sequence belongs to the aconitase/IPM isomerase family. LeuC type 1 subfamily. As to quaternary structure, heterodimer of LeuC and LeuD. The cofactor is [4Fe-4S] cluster.

It carries out the reaction (2R,3S)-3-isopropylmalate = (2S)-2-isopropylmalate. It participates in amino-acid biosynthesis; L-leucine biosynthesis; L-leucine from 3-methyl-2-oxobutanoate: step 2/4. Its function is as follows. Catalyzes the isomerization between 2-isopropylmalate and 3-isopropylmalate, via the formation of 2-isopropylmaleate. This Acinetobacter baumannii (strain AB0057) protein is 3-isopropylmalate dehydratase large subunit.